Here is a 525-residue protein sequence, read N- to C-terminus: Patatin-like protein 8 (525 aa).

Residues 1-50 are disordered; sequence MNRRYEKPPPLSVSSKGKKKHFVNHTAPNTPGNYERTQTSPTLSTARSHE. Over residues 26–46 the composition is skewed to polar residues; it reads TAPNTPGNYERTQTSPTLSTA. In terms of domain architecture, PNPLA spans 124–338; the sequence is LSIDGGGMRG…AMSNPTAAAI (215 aa). Residues 128 to 133 carry the GXGXXG motif; it reads GGGMRG. Ser-168 functions as the Nucleophile in the catalytic mechanism.

It belongs to the patatin family. Specifically expressed in roots.

Possesses non-specific lipolytic acyl hydrolase (LAH) activity. Hydrolyzes phospholipids as well as galactolipids. May play a role in disease resistance. This chain is Patatin-like protein 8 (PLP8), found in Arabidopsis thaliana (Mouse-ear cress).